The chain runs to 252 residues: Imidazole glycerol phosphate synthase subunit HisF (252 aa).

Catalysis depends on residues D11 and D130.

It belongs to the HisA/HisF family. As to quaternary structure, heterodimer of HisH and HisF.

The protein resides in the cytoplasm. The catalysed reaction is 5-[(5-phospho-1-deoxy-D-ribulos-1-ylimino)methylamino]-1-(5-phospho-beta-D-ribosyl)imidazole-4-carboxamide + L-glutamine = D-erythro-1-(imidazol-4-yl)glycerol 3-phosphate + 5-amino-1-(5-phospho-beta-D-ribosyl)imidazole-4-carboxamide + L-glutamate + H(+). Its pathway is amino-acid biosynthesis; L-histidine biosynthesis; L-histidine from 5-phospho-alpha-D-ribose 1-diphosphate: step 5/9. In terms of biological role, IGPS catalyzes the conversion of PRFAR and glutamine to IGP, AICAR and glutamate. The HisF subunit catalyzes the cyclization activity that produces IGP and AICAR from PRFAR using the ammonia provided by the HisH subunit. The protein is Imidazole glycerol phosphate synthase subunit HisF of Petrotoga mobilis (strain DSM 10674 / SJ95).